Here is a 356-residue protein sequence, read N- to C-terminus: Rhomboid-related protein 1 (356 aa).

The next 7 membrane-spanning stretches (helical) occupy residues 107–129 (WCPP…FFYW), 172–194 (YMFL…LVGI), 201–223 (KIWR…QYAI), 227–249 (SLLV…NVIL), 256–275 (LRWI…FGGA), 290–312 (HLAH…YNVV), and 319–341 (IIRY…FVIV). The Nucleophile role is filled by Ser233. His293 is a catalytic residue.

It belongs to the peptidase S54 family.

Its subcellular location is the membrane. It catalyses the reaction Cleaves type-1 transmembrane domains using a catalytic dyad composed of serine and histidine that are contributed by different transmembrane domains.. Functionally, serine protease which activates lin-3 isoform a in the proximal vulva precursor cells (VPC) during vulva development to transmit the inductive anchor cell signal to the distal VPCs. The protein is Rhomboid-related protein 1 of Caenorhabditis elegans.